We begin with the raw amino-acid sequence, 480 residues long: tRNA-2-methylthio-N(6)-dimethylallyladenosine synthase (480 aa).

The MTTase N-terminal domain maps to 32-149 (RKLYIRTFGC…LPELIRRRRA (118 aa)). Positions 41, 78, 112, 186, 190, and 193 each coordinate [4Fe-4S] cluster. Residues 172 to 405 (RIEGATAFVS…QALINAQAAA (234 aa)) enclose the Radical SAM core domain. The TRAM domain occupies 408–471 (QAMVGTRQRL…PNSLRARVAD (64 aa)).

This sequence belongs to the methylthiotransferase family. MiaB subfamily. As to quaternary structure, monomer. Requires [4Fe-4S] cluster as cofactor.

It localises to the cytoplasm. The enzyme catalyses N(6)-dimethylallyladenosine(37) in tRNA + (sulfur carrier)-SH + AH2 + 2 S-adenosyl-L-methionine = 2-methylsulfanyl-N(6)-dimethylallyladenosine(37) in tRNA + (sulfur carrier)-H + 5'-deoxyadenosine + L-methionine + A + S-adenosyl-L-homocysteine + 2 H(+). Its function is as follows. Catalyzes the methylthiolation of N6-(dimethylallyl)adenosine (i(6)A), leading to the formation of 2-methylthio-N6-(dimethylallyl)adenosine (ms(2)i(6)A) at position 37 in tRNAs that read codons beginning with uridine. This is tRNA-2-methylthio-N(6)-dimethylallyladenosine synthase from Bordetella petrii (strain ATCC BAA-461 / DSM 12804 / CCUG 43448).